We begin with the raw amino-acid sequence, 68 residues long: Protein SlyX homolog (68 aa).

This sequence belongs to the SlyX family.

The sequence is that of Protein SlyX homolog from Brucella anthropi (strain ATCC 49188 / DSM 6882 / CCUG 24695 / JCM 21032 / LMG 3331 / NBRC 15819 / NCTC 12168 / Alc 37) (Ochrobactrum anthropi).